We begin with the raw amino-acid sequence, 299 residues long: Transcription termination/antitermination protein NusG (299 aa).

Residues 30–96 are disordered; it reads DPDEAELADA…APVEPAEPVD (67 aa). 2 consecutive repeat copies span residues 46-49 and 70-73. Residues 46 to 87 form a 4 X 4 AA repeats of E-E-A-A region; sequence EEAALHVESDEDEDEADVEVDAAVEEAADDAEVAEEEAEEAA. The span at 54–87 shows a compositional bias: acidic residues; that stretch reads SDEDEDEADVEVDAAVEEAADDAEVAEEEAEEAA. A 3; approximate repeat occupies 80–83; sequence EEEA. Repeat 4 spans residues 84–87; the sequence is EEAA. The region spanning 248–276 is the KOW domain; sequence VGDSVTVTDGPFATLQATINEINPDSKKV.

The protein belongs to the NusG family. Post-translationally, the N-terminus is blocked.

In terms of biological role, participates in transcription elongation, termination and antitermination. In Streptomyces virginiae (Streptomyces cinnamonensis), this protein is Transcription termination/antitermination protein NusG.